Reading from the N-terminus, the 235-residue chain is Riboflavin kinase (235 aa).

2 residues coordinate Mg(2+): T45 and N47. Catalysis depends on E140, which acts as the Nucleophile.

This sequence belongs to the flavokinase family. It depends on Zn(2+) as a cofactor. Mg(2+) serves as cofactor.

The catalysed reaction is riboflavin + ATP = FMN + ADP + H(+). The protein operates within cofactor biosynthesis; FMN biosynthesis; FMN from riboflavin (ATP route): step 1/1. In terms of biological role, catalyzes the phosphorylation of riboflavin (vitamin B2) to form flavin mononucleotide (FMN) coenzyme. This chain is Riboflavin kinase (FMN1), found in Chaetomium globosum (strain ATCC 6205 / CBS 148.51 / DSM 1962 / NBRC 6347 / NRRL 1970) (Soil fungus).